Reading from the N-terminus, the 216-residue chain is MGWIRGRRPRHNLEMSEFHNYKLGLAKSDFSTRCQKQRCPVIKSKCRENASPLFFCCFIAVAMGIRFIIMVTIWSAVFLNSLFNQEVQIPLTESYCGPCPKNWICYKNNCYQFFNESKNWYESQASCMSQNASLLKVYSKEDQDLLKLVKSYHWMGLVHIPTNGSWQWEDGSILSPNLLTIIEMQKGDCALYASSFKGYIENCSIPNTYICMQRTV.

At 1-51 the chain is on the cytoplasmic side; the sequence is MGWIRGRRPRHNLEMSEFHNYKLGLAKSDFSTRCQKQRCPVIKSKCRENAS. The helical; Signal-anchor for type II membrane protein transmembrane segment at 52–72 threads the bilayer; it reads PLFFCCFIAVAMGIRFIIMVT. Over 73–216 the chain is Extracellular; sequence IWSAVFLNSL…NTYICMQRTV (144 aa). Intrachain disulfides connect Cys-96–Cys-105 and Cys-99–Cys-110. Positions 98–213 constitute a C-type lectin domain; it reads PCPKNWICYK…SIPNTYICMQ (116 aa). 4 N-linked (GlcNAc...) asparagine glycosylation sites follow: Asn-115, Asn-131, Asn-163, and Asn-202. 2 cysteine pairs are disulfide-bonded: Cys-127–Cys-211 and Cys-189–Cys-203.

In terms of assembly, homodimer; disulfide-linked. Heterohexamer composed of two subunits of KLRK1 and four subunits of HCST/DAP10. Interacts (via transmembrane domain) with HCST/DAP10 (via transmembrane domain); the interaction is required for KLRK1 NK cell surface and induces NK cell-mediated cytotoxicity. Can form disulfide-bonded heterodimer with CD94. Interacts with CEACAM1; recruits PTPN6 that dephosphorylates VAV1. Natural killer cells.

The protein localises to the cell membrane. Functionally, functions as an activating and costimulatory receptor involved in immunosurveillance upon binding to various cellular stress-inducible ligands displayed at the surface of autologous tumor cells and virus-infected cells. Provides both stimulatory and costimulatory innate immune responses on activated killer (NK) cells, leading to cytotoxic activity. Acts as a costimulatory receptor for T-cell receptor (TCR) in CD8(+) T-cell-mediated adaptive immune responses by amplifying T-cell activation. Stimulates perforin-mediated elimination of ligand-expressing tumor cells. Signaling involves calcium influx, culminating in the expression of TNF-alpha. Participates in NK cell-mediated bone marrow graft rejection. May play a regulatory role in differentiation and survival of NK cells. Binds to ligands belonging to various subfamilies of MHC class I-related glycoproteins. The protein is NKG2-D type II integral membrane protein (KLRK1) of Macaca fascicularis (Crab-eating macaque).